The chain runs to 559 residues: Urocanate hydratase (559 aa).

NAD(+) contacts are provided by residues 54-55, Gln132, 178-180, Glu198, Arg203, 244-245, 265-269, 275-276, and Tyr324; these read GG, GMG, NA, QTSAH, and YL. The active site involves Cys412. Gly494 lines the NAD(+) pocket.

This sequence belongs to the urocanase family. Requires NAD(+) as cofactor.

Its subcellular location is the cytoplasm. It catalyses the reaction 4-imidazolone-5-propanoate = trans-urocanate + H2O. It participates in amino-acid degradation; L-histidine degradation into L-glutamate; N-formimidoyl-L-glutamate from L-histidine: step 2/3. Catalyzes the conversion of urocanate to 4-imidazolone-5-propionate. This Photorhabdus laumondii subsp. laumondii (strain DSM 15139 / CIP 105565 / TT01) (Photorhabdus luminescens subsp. laumondii) protein is Urocanate hydratase.